Consider the following 295-residue polypeptide: MNESESEIQARLLAQALPFMQRYENKTIVVKYGGHAMGNPELGKAFASDIALLKQSGVNPIVVHGGGPQIGAMLNKMGIESKFEGGLRVTDQKTVEIVEMVLAGSINKEIVALINQTGEWAIGLCGKDGNMVFAEKARKTIKDPDSNIERVLDLGFVGEVVEVDRTLLDLLARSEMIPVIAPVAPGRDGATYNINADTFAGAIAGALNATRLLFLTDVPGVLDKNGQLIKELSVAEAHALIADGTISGGMIPKVETCIDAIKAGVQGVVILNGKTAHSVLLEIFTEHGIGTLIVP.

Substrate contacts are provided by residues glycine 66–glycine 67, arginine 88, and asparagine 193.

Belongs to the acetylglutamate kinase family. ArgB subfamily.

Its subcellular location is the cytoplasm. It catalyses the reaction N-acetyl-L-glutamate + ATP = N-acetyl-L-glutamyl 5-phosphate + ADP. It participates in amino-acid biosynthesis; L-arginine biosynthesis; N(2)-acetyl-L-ornithine from L-glutamate: step 2/4. Its function is as follows. Catalyzes the ATP-dependent phosphorylation of N-acetyl-L-glutamate. The polypeptide is Acetylglutamate kinase (Rhizobium etli (strain CIAT 652)).